A 451-amino-acid chain; its full sequence is AP-3 complex subunit mu (451 aa).

In terms of domain architecture, MHD spans Asn-191–Arg-450.

Belongs to the adaptor complexes medium subunit family. Adaptor protein complex 3 (AP-3) is a heterotetramer composed of 2 large adaptins (APL5 and APL6), a medium adaptin (APM3) and a small adaptin (APS3).

The protein resides in the golgi apparatus. The protein localises to the cytoplasmic vesicle membrane. Its function is as follows. Part of the AP-3 complex, an adaptor-related complex which is not clathrin-associated. The complex is associated with the Golgi region as well as more peripheral structures. It facilitates the budding of vesicles from the Golgi membrane and may be directly involved in trafficking to the vacuole. This is AP-3 complex subunit mu (APM3) from Eremothecium gossypii (strain ATCC 10895 / CBS 109.51 / FGSC 9923 / NRRL Y-1056) (Yeast).